Here is a 612-residue protein sequence, read N- to C-terminus: Dihydroxy-acid dehydratase (612 aa).

Asp-81 provides a ligand contact to Mg(2+). [2Fe-2S] cluster is bound at residue Cys-122. Residues Asp-123 and Lys-124 each coordinate Mg(2+). The residue at position 124 (Lys-124) is an N6-carboxylysine. A [2Fe-2S] cluster-binding site is contributed by Cys-195. Position 491 (Glu-491) interacts with Mg(2+). The Proton acceptor role is filled by Ser-517.

Belongs to the IlvD/Edd family. Homodimer. Requires [2Fe-2S] cluster as cofactor. Mg(2+) serves as cofactor.

It carries out the reaction (2R)-2,3-dihydroxy-3-methylbutanoate = 3-methyl-2-oxobutanoate + H2O. It catalyses the reaction (2R,3R)-2,3-dihydroxy-3-methylpentanoate = (S)-3-methyl-2-oxopentanoate + H2O. It functions in the pathway amino-acid biosynthesis; L-isoleucine biosynthesis; L-isoleucine from 2-oxobutanoate: step 3/4. Its pathway is amino-acid biosynthesis; L-valine biosynthesis; L-valine from pyruvate: step 3/4. Functions in the biosynthesis of branched-chain amino acids. Catalyzes the dehydration of (2R,3R)-2,3-dihydroxy-3-methylpentanoate (2,3-dihydroxy-3-methylvalerate) into 2-oxo-3-methylpentanoate (2-oxo-3-methylvalerate) and of (2R)-2,3-dihydroxy-3-methylbutanoate (2,3-dihydroxyisovalerate) into 2-oxo-3-methylbutanoate (2-oxoisovalerate), the penultimate precursor to L-isoleucine and L-valine, respectively. The protein is Dihydroxy-acid dehydratase of Sinorhizobium medicae (strain WSM419) (Ensifer medicae).